The primary structure comprises 453 residues: Phosphoglucosamine mutase (453 aa).

Serine 110 acts as the Phosphoserine intermediate in catalysis. Mg(2+) contacts are provided by serine 110, aspartate 248, aspartate 250, and aspartate 252. At serine 110 the chain carries Phosphoserine.

It belongs to the phosphohexose mutase family. The cofactor is Mg(2+). Post-translationally, activated by phosphorylation.

The enzyme catalyses alpha-D-glucosamine 1-phosphate = D-glucosamine 6-phosphate. Its function is as follows. Catalyzes the conversion of glucosamine-6-phosphate to glucosamine-1-phosphate. This chain is Phosphoglucosamine mutase, found in Mycolicibacterium smegmatis (strain ATCC 700084 / mc(2)155) (Mycobacterium smegmatis).